We begin with the raw amino-acid sequence, 418 residues long: uncharacterized protein (418 aa).

The 152-residue stretch at 7 to 158 (IDVRPIAEAE…TGLDPRWSGP (152 aa)) folds into the N-acetyltransferase domain. Acetyl-CoA contacts are provided by residues 87–89 (VTV) and 95–100 (RRGLLT). The active-site Proton donor is the Tyr-128. Phe-418 acts as the Proton acceptor; via carboxylate in catalysis.

This sequence belongs to the acetyltransferase Eis family. As to quaternary structure, homohexamer; trimer of dimers.

This is an uncharacterized protein from Streptomyces avermitilis (strain ATCC 31267 / DSM 46492 / JCM 5070 / NBRC 14893 / NCIMB 12804 / NRRL 8165 / MA-4680).